Consider the following 309-residue polypeptide: Olfactory receptor 8U1 (309 aa).

Residues 1–25 (MAHINCTQATEFILVGLTDHQELKM) are Extracellular-facing. An N-linked (GlcNAc...) asparagine glycan is attached at Asn5. A helical transmembrane segment spans residues 26–46 (PLFVLFLSIYLFTVVGNLGLI). Over 47 to 54 (LLIRADTS) the chain is Cytoplasmic. A helical transmembrane segment spans residues 55–75 (LNTPMYFFLSNLAFVDFCYSS). At 76-99 (VITPKMLGNFLYKQNVISFDACAT) the chain is on the extracellular side. Cysteines 97 and 189 form a disulfide. Residues 100–120 (QLGCFLTFMISESLLLASMAY) traverse the membrane as a helical segment. Residues 121 to 139 (DRYVAICNPLLYMVVMTPG) lie on the Cytoplasmic side of the membrane. Residues 140–160 (ICIQLVAVPYSYSFLMALFHT) traverse the membrane as a helical segment. The Extracellular portion of the chain corresponds to 161–197 (ILTFRLSYCHSNIVNHFYCDDMPLLRLTCSDTRFKQL). Residues 198–217 (WIFACAGIMFISSLLIVFVS) traverse the membrane as a helical segment. Over 218–237 (YMFIISAILRMHSAEGRQKA) the chain is Cytoplasmic. A helical membrane pass occupies residues 238-258 (FSTCGSHMLAVTIFYGTLIFM). Over 259–271 (YLQPSSSHALDTD) the chain is Extracellular. A helical transmembrane segment spans residues 272-292 (KMASVFYTVIIPMLNPLIYSL). The Cytoplasmic segment spans residues 293 to 309 (QNKEVKEALKKIIINKN).

This sequence belongs to the G-protein coupled receptor 1 family.

The protein localises to the cell membrane. Odorant receptor. This chain is Olfactory receptor 8U1 (OR8U1), found in Homo sapiens (Human).